The following is a 382-amino-acid chain: D-galactonate dehydratase (382 aa).

Residue aspartate 183 participates in Mg(2+) binding. The active-site Proton donor is histidine 185. Residues glutamate 209 and glutamate 235 each coordinate Mg(2+). The Proton acceptor role is filled by histidine 285.

This sequence belongs to the mandelate racemase/muconate lactonizing enzyme family. GalD subfamily. The cofactor is Mg(2+).

It catalyses the reaction D-galactonate = 2-dehydro-3-deoxy-D-galactonate + H2O. Its pathway is carbohydrate acid metabolism; D-galactonate degradation; D-glyceraldehyde 3-phosphate and pyruvate from D-galactonate: step 1/3. Its function is as follows. Catalyzes the dehydration of D-galactonate to 2-keto-3-deoxy-D-galactonate. This is D-galactonate dehydratase from Xanthomonas campestris pv. campestris (strain 8004).